A 195-amino-acid polypeptide reads, in one-letter code: Imidazoleglycerol-phosphate dehydratase (195 aa).

Belongs to the imidazoleglycerol-phosphate dehydratase family.

The protein localises to the cytoplasm. It catalyses the reaction D-erythro-1-(imidazol-4-yl)glycerol 3-phosphate = 3-(imidazol-4-yl)-2-oxopropyl phosphate + H2O. It participates in amino-acid biosynthesis; L-histidine biosynthesis; L-histidine from 5-phospho-alpha-D-ribose 1-diphosphate: step 6/9. The polypeptide is Imidazoleglycerol-phosphate dehydratase (Thermotoga petrophila (strain ATCC BAA-488 / DSM 13995 / JCM 10881 / RKU-1)).